Here is a 417-residue protein sequence, read N- to C-terminus: uncharacterized protein (417 aa).

10 helical membrane-spanning segments follow: residues 21–41, 50–70, 88–108, 166–186, 217–237, 255–275, 283–303, 308–328, 351–371, and 373–393; these read ISSLGDWLHILAVLTLAAFQL, LLMMSFALPVIVLGPVSGLLA, LTVISCVYVSELWQLYVLLSV, SVFYINAGAFFLSAVILFFLP, MPLLLTGLLTACVVLFVLQIG, LAGWCMAVSGAGMLLTAAITG, LLYFSAGTLLLGLATGGAPFL, IAGITLFIFAFFIMGAAFGLV, AIQSATTLASILGMAGGGVLA, and WIGVSLAFLVCGCLLIMIGLI.

It belongs to the major facilitator superfamily. TCR/Tet family.

It localises to the cell membrane. This is an uncharacterized protein from Bacillus subtilis (strain 168).